Here is a 244-residue protein sequence, read N- to C-terminus: UPF0280 protein Msp_1322 (244 aa).

It belongs to the UPF0280 family.

This chain is UPF0280 protein Msp_1322, found in Methanosphaera stadtmanae (strain ATCC 43021 / DSM 3091 / JCM 11832 / MCB-3).